A 352-amino-acid polypeptide reads, in one-letter code: Zinc finger protein 185 (352 aa).

Disordered stretches follow at residues 1 to 73 (MTTE…ELQS) and 86 to 121 (DVLP…ITPP). Residue serine 18 is modified to Phosphoserine. Residues 61-72 (KKTTSSPTQELQ) are compositionally biased toward polar residues. Threonine 137 bears the Phosphothreonine mark. Over residues 251–268 (VSSGKPVSSHCDSPSSIE) the composition is skewed to polar residues. Positions 251 to 287 (VSSGKPVSSHCDSPSSIEDSLDLAKKPPHEGTPSERP) are disordered. Over residues 272–287 (DLAKKPPHEGTPSERP) the composition is skewed to basic and acidic residues. An LIM zinc-binding domain is found at 292–347 (CTYCSHEIQDCPKITLEHLGICCHEYCFKCGICNKPMGDLLDQIFIHRDTIHCGKC).

As to expression, expressed in skin, kidney, ovary, testis. Also expressed in brain, cartilage, heart, lung, spleen and thymus.

The protein localises to the cytoplasm. Its subcellular location is the cytoskeleton. The protein resides in the cell junction. It is found in the focal adhesion. Functionally, may be involved in the regulation of cellular proliferation and/or differentiation. This Mus musculus (Mouse) protein is Zinc finger protein 185 (Znf185).